A 367-amino-acid chain; its full sequence is tRNA/tmRNA (uracil-C(5))-methyltransferase (367 aa).

Residues Q190, Y218, N223, E239, and D299 each contribute to the S-adenosyl-L-methionine site. Residue C324 is the Nucleophile of the active site. E358 acts as the Proton acceptor in catalysis.

The protein belongs to the class I-like SAM-binding methyltransferase superfamily. RNA M5U methyltransferase family. TrmA subfamily.

The enzyme catalyses uridine(54) in tRNA + S-adenosyl-L-methionine = 5-methyluridine(54) in tRNA + S-adenosyl-L-homocysteine + H(+). It catalyses the reaction uridine(341) in tmRNA + S-adenosyl-L-methionine = 5-methyluridine(341) in tmRNA + S-adenosyl-L-homocysteine + H(+). Functionally, dual-specificity methyltransferase that catalyzes the formation of 5-methyluridine at position 54 (m5U54) in all tRNAs, and that of position 341 (m5U341) in tmRNA (transfer-mRNA). The polypeptide is tRNA/tmRNA (uracil-C(5))-methyltransferase (Yersinia enterocolitica serotype O:8 / biotype 1B (strain NCTC 13174 / 8081)).